Consider the following 489-residue polypeptide: MEKLSILTERQQTELNYAIIQYLQPLCQQDNHALLDQLSKILNIDQWTQESNNVEKVDNYLEKRWSTVLRLQKKIIDLENEISNLNNIINSSNSDNNGIVLSKDKINWIPKGTAKQSYQCENIVTTVKLHPNLPLVLNGCNDGNLYIWNISNDDNTIPEKMIKAHTRAINKICFTYKKPYYLATCSSDLTIKIWDEKFNHIRTLNGHEHTVSSIQFSPIDNSILYSVSRDKNIRVWDIFQGISLKSFVGHSEWCRDLDIVSSDNNGDFVLTCSNDQSARLSHASSGAGLAMIVGHGHVVETVKFLPALQANKILDEYITKNIEQFPTIPLELLKDKTYNQLGFKYCITASRDNTIKLWLIPPPKIAPHRPPLPSKYNNSQSWMIAELRGHSSWVKCLCVHPNGRFIISGSDDKTIKFWDLSSLLETGSVNVVKTIIGHDGFINDIDFARLKEASDSTPTSQEDLLKEVEKRMRCLFISGSADNSIKLWN.

Positions S66–G98 form a coiled coil. WD repeat units follow at residues Q119–P158, A164–N205, G206–S246, G249–M291, I328–H368, G389–S428, and G437–K486.

This sequence belongs to the WD repeat LIS1/nudF family. As to quaternary structure, self-associates. Interacts with NDL1 and dynein.

The protein resides in the cytoplasm. Its subcellular location is the cytoskeleton. It is found in the spindle pole. Functionally, positively regulates the activity of the minus-end directed microtubule motor protein dynein. Plays a central role in positioning the mitotic spindle at the bud neck during cell division. Targets cytoplasmic dynein to microtubule plus ends, thereby promoting dynein-mediated microtubule sliding along the bud cortex and consequently the movement of the mitotic spindle to the bud neck. This chain is Nuclear distribution protein PAC1, found in Candida dubliniensis (strain CD36 / ATCC MYA-646 / CBS 7987 / NCPF 3949 / NRRL Y-17841) (Yeast).